A 336-amino-acid chain; its full sequence is Glycerol-3-phosphate dehydrogenase [NAD(P)+] (336 aa).

Residues S16, Y17, H37, and K111 each contribute to the NADPH site. 3 residues coordinate sn-glycerol 3-phosphate: K111, G140, and T142. An NADPH-binding site is contributed by A144. Sn-glycerol 3-phosphate-binding residues include K196, D249, S259, R260, and N261. Residue K196 is the Proton acceptor of the active site. R260 contributes to the NADPH binding site. NADPH is bound by residues V284 and E286.

This sequence belongs to the NAD-dependent glycerol-3-phosphate dehydrogenase family.

The protein localises to the cytoplasm. The enzyme catalyses sn-glycerol 3-phosphate + NAD(+) = dihydroxyacetone phosphate + NADH + H(+). It carries out the reaction sn-glycerol 3-phosphate + NADP(+) = dihydroxyacetone phosphate + NADPH + H(+). Its pathway is membrane lipid metabolism; glycerophospholipid metabolism. Its function is as follows. Catalyzes the reduction of the glycolytic intermediate dihydroxyacetone phosphate (DHAP) to sn-glycerol 3-phosphate (G3P), the key precursor for phospholipid synthesis. This Glaesserella parasuis serovar 5 (strain SH0165) (Haemophilus parasuis) protein is Glycerol-3-phosphate dehydrogenase [NAD(P)+].